Consider the following 314-residue polypeptide: Small ribosomal subunit biogenesis GTPase RsgA (314 aa).

The region spanning 78-238 is the CP-type G domain; the sequence is SEIFREKLIA…IIDSPGFQEF (161 aa). Residues 127–130 and 180–188 each bind GTP; these read NKID and GQSGVGKST. The Zn(2+) site is built by Cys-262, Cys-267, His-269, and Cys-275.

It belongs to the TRAFAC class YlqF/YawG GTPase family. RsgA subfamily. Monomer. Associates with 30S ribosomal subunit, binds 16S rRNA. The cofactor is Zn(2+).

Its subcellular location is the cytoplasm. Functionally, one of several proteins that assist in the late maturation steps of the functional core of the 30S ribosomal subunit. Helps release RbfA from mature subunits. May play a role in the assembly of ribosomal proteins into the subunit. Circularly permuted GTPase that catalyzes slow GTP hydrolysis, GTPase activity is stimulated by the 30S ribosomal subunit. This is Small ribosomal subunit biogenesis GTPase RsgA from Nitrosomonas europaea (strain ATCC 19718 / CIP 103999 / KCTC 2705 / NBRC 14298).